The following is a 150-amino-acid chain: MVSVKYVPSDLLINYVSEKLKSEKKIAEPDWSKYVKTGISREKSPVNRDWIYVRAAAMLRKLYINGYLGISRMSSEYGGKVDRGSKRYHAAQGSRSIIRYLFHELEKAGYVQKTPKGRSLSPQGMSLLDNASKDIIKQLAEKDPAFQKFI.

Belongs to the eukaryotic ribosomal protein eS19 family. In terms of assembly, part of the 30S ribosomal subunit.

May be involved in maturation of the 30S ribosomal subunit. In Thermoplasma acidophilum (strain ATCC 25905 / DSM 1728 / JCM 9062 / NBRC 15155 / AMRC-C165), this protein is Small ribosomal subunit protein eS19.